The chain runs to 511 residues: Limonoid UDP-glucosyltransferase (511 aa).

His-19 (proton acceptor) is an active-site residue. An an anthocyanidin-binding site is contributed by His-19. UDP-alpha-D-glucose is bound by residues Gln-344, His-359, Trp-362, Asn-363, Ser-364, and Glu-367. Gly-382 contacts an anthocyanidin. Positions 383 and 384 each coordinate UDP-alpha-D-glucose.

This sequence belongs to the UDP-glycosyltransferase family.

The catalysed reaction is limonin + UDP-alpha-D-glucose + H2O = limonin 17-beta-D-glucoside + UDP + 2 H(+). Involved in the glucosylation of limonoids. This Citrus unshiu (Satsuma mandarin) protein is Limonoid UDP-glucosyltransferase.